We begin with the raw amino-acid sequence, 271 residues long: Formamidopyrimidine-DNA glycosylase (271 aa).

Pro2 acts as the Schiff-base intermediate with DNA in catalysis. Glu3 functions as the Proton donor in the catalytic mechanism. Residue Lys58 is the Proton donor; for beta-elimination activity of the active site. 3 residues coordinate DNA: His91, Arg110, and Arg152. Residues Asn237–Lys271 form an FPG-type zinc finger. The active-site Proton donor; for delta-elimination activity is the Arg261.

The protein belongs to the FPG family. In terms of assembly, monomer. It depends on Zn(2+) as a cofactor.

The enzyme catalyses Hydrolysis of DNA containing ring-opened 7-methylguanine residues, releasing 2,6-diamino-4-hydroxy-5-(N-methyl)formamidopyrimidine.. It catalyses the reaction 2'-deoxyribonucleotide-(2'-deoxyribose 5'-phosphate)-2'-deoxyribonucleotide-DNA = a 3'-end 2'-deoxyribonucleotide-(2,3-dehydro-2,3-deoxyribose 5'-phosphate)-DNA + a 5'-end 5'-phospho-2'-deoxyribonucleoside-DNA + H(+). In terms of biological role, involved in base excision repair of DNA damaged by oxidation or by mutagenic agents. Acts as a DNA glycosylase that recognizes and removes damaged bases. Has a preference for oxidized purines, such as 7,8-dihydro-8-oxoguanine (8-oxoG). Has AP (apurinic/apyrimidinic) lyase activity and introduces nicks in the DNA strand. Cleaves the DNA backbone by beta-delta elimination to generate a single-strand break at the site of the removed base with both 3'- and 5'-phosphates. The protein is Formamidopyrimidine-DNA glycosylase of Saccharophagus degradans (strain 2-40 / ATCC 43961 / DSM 17024).